The sequence spans 276 residues: Small ribosomal subunit protein uS3 (276 aa).

The KH type-2 domain maps to 17–86 (VDEYLAKELD…NPQIDVQDVG (70 aa)). Positions 193–276 (FQINAPPKEP…AETHGDIQDR (84 aa)) are disordered. The segment covering 214–227 (EAEPSQAAETQEQQ) has biased composition (low complexity). Composition is skewed to basic and acidic residues over residues 228–240 (AGEK…RLLD) and 258–276 (PESR…IQDR).

This sequence belongs to the universal ribosomal protein uS3 family. In terms of assembly, part of the 30S ribosomal subunit.

In terms of biological role, binds the lower part of the 30S subunit head. The polypeptide is Small ribosomal subunit protein uS3 (Methanothrix thermoacetophila (strain DSM 6194 / JCM 14653 / NBRC 101360 / PT) (Methanosaeta thermophila)).